The following is a 240-amino-acid chain: Anti-H(O) lectin (240 aa).

A glycan (N-linked (GlcNAc...) asparagine) is linked at N4. Positions 124 and 126 each coordinate Mn(2+). Residues D126, Y128, N130, and D133 each contribute to the Ca(2+) site. D133 and H141 together coordinate Mn(2+).

The protein belongs to the leguminous lectin family.

Functionally, L-fucose specific lectin. The polypeptide is Anti-H(O) lectin (Lotus tetragonolobus (Winged pea)).